The following is a 1051-amino-acid chain: Ubiquitin-activating enzyme E1 1 (1051 aa).

Tandem repeats lie at residues 56-194 and 453-605. A 2 approximate repeats region spans residues 56–605; that stretch reads GRETMKRLFG…GAKCNTQMVI (550 aa). Residues alanine 472, aspartate 498, arginine 509, lysine 522, and 570-571 contribute to the ATP site; that span reads DN. The Glycyl thioester intermediate role is filled by cysteine 626.

The protein belongs to the ubiquitin-activating E1 family. Monomer. Post-translationally, the N-terminus is blocked.

It catalyses the reaction ATP + ubiquitin + [E1 ubiquitin-activating enzyme]-L-cysteine = AMP + diphosphate + S-ubiquitinyl-[E1 ubiquitin-activating enzyme]-L-cysteine.. The protein operates within protein modification; protein ubiquitination. In terms of biological role, activates ubiquitin by first adenylating its C-terminal glycine residue with ATP, and thereafter linking this residue to the side chain of a cysteine residue in E1, yielding a ubiquitin-E1 thioester and free AMP. The polypeptide is Ubiquitin-activating enzyme E1 1 (Triticum aestivum (Wheat)).